A 392-amino-acid chain; its full sequence is Formate-dependent phosphoribosylglycinamide formyltransferase (392 aa).

N(1)-(5-phospho-beta-D-ribosyl)glycinamide contacts are provided by residues 22–23 (EL) and Glu-82. ATP contacts are provided by residues Arg-114, Lys-155, 160–165 (SSGHGQ), 195–198 (EGFI), and Glu-203. The region spanning 119–307 (RLAAEELGLK…QFALHARAIL (189 aa)) is the ATP-grasp domain. The Mg(2+) site is built by Glu-266 and Glu-278. N(1)-(5-phospho-beta-D-ribosyl)glycinamide contacts are provided by residues Asp-285, Lys-355, and 362-363 (RR).

This sequence belongs to the PurK/PurT family. As to quaternary structure, homodimer.

It localises to the cell inner membrane. It carries out the reaction N(1)-(5-phospho-beta-D-ribosyl)glycinamide + formate + ATP = N(2)-formyl-N(1)-(5-phospho-beta-D-ribosyl)glycinamide + ADP + phosphate + H(+). It functions in the pathway purine metabolism; IMP biosynthesis via de novo pathway; N(2)-formyl-N(1)-(5-phospho-D-ribosyl)glycinamide from N(1)-(5-phospho-D-ribosyl)glycinamide (formate route): step 1/1. Functionally, involved in the de novo purine biosynthesis. Catalyzes the transfer of formate to 5-phospho-ribosyl-glycinamide (GAR), producing 5-phospho-ribosyl-N-formylglycinamide (FGAR). Formate is provided by PurU via hydrolysis of 10-formyl-tetrahydrofolate. The polypeptide is Formate-dependent phosphoribosylglycinamide formyltransferase (Mannheimia haemolytica (Pasteurella haemolytica)).